The primary structure comprises 245 residues: LOB domain-containing protein 16 (245 aa).

The region spanning 14–116 is the LOB domain; that stretch reads SPCGACKFLR…SQVMQMKAQI (103 aa). Residues 162 to 183 form a disordered region; it reads YYGHVNPNNPVSPQSSLEESFS.

Belongs to the LOB domain-containing protein family. Homodimer and heterodimer with LBD18. As to expression, expressed in roots and faintly in shoots.

The protein resides in the nucleus. In terms of biological role, transcriptional activator. Involved in lateral root formation. Regulated by the transcriptional activators ARF7 and ARF19. Functions in the initiation and emergence of lateral roots, in conjunction with LBD18, downstream of ARF7 and ARF19. Acts downstream of the auxin influx carriers AUX1 and LAX1 in the regulation of lateral root initiation and development. The chain is LOB domain-containing protein 16 (LBD16) from Arabidopsis thaliana (Mouse-ear cress).